The sequence spans 98 residues: Large ribosomal subunit protein uL23 (98 aa).

Belongs to the universal ribosomal protein uL23 family. As to quaternary structure, part of the 50S ribosomal subunit. Contacts protein L29, and trigger factor when it is bound to the ribosome.

In terms of biological role, one of the early assembly proteins it binds 23S rRNA. One of the proteins that surrounds the polypeptide exit tunnel on the outside of the ribosome. Forms the main docking site for trigger factor binding to the ribosome. This is Large ribosomal subunit protein uL23 from Rickettsia africae (strain ESF-5).